A 332-amino-acid chain; its full sequence is Fructose-1,6-bisphosphatase class 1 (332 aa).

The Mg(2+) site is built by Glu-94, Asp-116, Leu-118, and Asp-119. Residues 119–122 (DGSS), Asn-211, Tyr-239, 257–259 (YLY), and Lys-269 each bind substrate. Glu-275 provides a ligand contact to Mg(2+).

The protein belongs to the FBPase class 1 family. As to quaternary structure, homotetramer. Mg(2+) is required as a cofactor.

It is found in the cytoplasm. It carries out the reaction beta-D-fructose 1,6-bisphosphate + H2O = beta-D-fructose 6-phosphate + phosphate. It functions in the pathway carbohydrate biosynthesis; Calvin cycle. The protein is Fructose-1,6-bisphosphatase class 1 of Synechococcus sp. (strain JA-3-3Ab) (Cyanobacteria bacterium Yellowstone A-Prime).